Here is a 139-residue protein sequence, read N- to C-terminus: Large ribosomal subunit protein uL16 (139 aa).

This sequence belongs to the universal ribosomal protein uL16 family. As to quaternary structure, part of the 50S ribosomal subunit.

In terms of biological role, binds 23S rRNA and is also seen to make contacts with the A and possibly P site tRNAs. The sequence is that of Large ribosomal subunit protein uL16 from Treponema pallidum (strain Nichols).